Here is a 414-residue protein sequence, read N- to C-terminus: Glutamyl-tRNA reductase (414 aa).

Substrate contacts are provided by residues 47 to 50 (TCNR), S106, 111 to 113 (EAQ), and Q117. Catalysis depends on C48, which acts as the Nucleophile. Residue 185 to 190 (GAGRTG) coordinates NADP(+).

This sequence belongs to the glutamyl-tRNA reductase family. In terms of assembly, homodimer.

It carries out the reaction (S)-4-amino-5-oxopentanoate + tRNA(Glu) + NADP(+) = L-glutamyl-tRNA(Glu) + NADPH + H(+). Its pathway is porphyrin-containing compound metabolism; protoporphyrin-IX biosynthesis; 5-aminolevulinate from L-glutamyl-tRNA(Glu): step 1/2. Functionally, catalyzes the NADPH-dependent reduction of glutamyl-tRNA(Glu) to glutamate 1-semialdehyde (GSA). This is Glutamyl-tRNA reductase from Herpetosiphon aurantiacus (strain ATCC 23779 / DSM 785 / 114-95).